We begin with the raw amino-acid sequence, 148 residues long: Large ribosomal subunit protein bL9 (148 aa).

It belongs to the bacterial ribosomal protein bL9 family.

Functionally, binds to the 23S rRNA. The protein is Large ribosomal subunit protein bL9 of Staphylococcus aureus (strain Newman).